A 76-amino-acid polypeptide reads, in one-letter code: Sec-independent protein translocase protein TatA (76 aa).

A helical transmembrane segment spans residues 1-21 (MGGLSIWHWLIVLLIVALVFG). The interval 40-76 (KDGMKEGETPADAQQLPRTGTVDVNAKETTRSDSNKA) is disordered. Residues 64-76 (NAKETTRSDSNKA) are compositionally biased toward basic and acidic residues.

Belongs to the TatA/E family. As to quaternary structure, the Tat system comprises two distinct complexes: a TatABC complex, containing multiple copies of TatA, TatB and TatC subunits, and a separate TatA complex, containing only TatA subunits. Substrates initially bind to the TatABC complex, which probably triggers association of the separate TatA complex to form the active translocon.

Its subcellular location is the cell inner membrane. Functionally, part of the twin-arginine translocation (Tat) system that transports large folded proteins containing a characteristic twin-arginine motif in their signal peptide across membranes. TatA could form the protein-conducting channel of the Tat system. This is Sec-independent protein translocase protein TatA from Burkholderia ambifaria (strain MC40-6).